We begin with the raw amino-acid sequence, 248 residues long: Ubiquinone/menaquinone biosynthesis C-methyltransferase UbiE (248 aa).

Positions 68 and 92 each coordinate S-adenosyl-L-methionine.

It belongs to the class I-like SAM-binding methyltransferase superfamily. MenG/UbiE family.

It carries out the reaction a 2-demethylmenaquinol + S-adenosyl-L-methionine = a menaquinol + S-adenosyl-L-homocysteine + H(+). The enzyme catalyses a 2-methoxy-6-(all-trans-polyprenyl)benzene-1,4-diol + S-adenosyl-L-methionine = a 5-methoxy-2-methyl-3-(all-trans-polyprenyl)benzene-1,4-diol + S-adenosyl-L-homocysteine + H(+). The protein operates within quinol/quinone metabolism; menaquinone biosynthesis; menaquinol from 1,4-dihydroxy-2-naphthoate: step 2/2. It participates in cofactor biosynthesis; ubiquinone biosynthesis. Methyltransferase required for the conversion of demethylmenaquinol (DMKH2) to menaquinol (MKH2) and the conversion of 2-polyprenyl-6-methoxy-1,4-benzoquinol (DDMQH2) to 2-polyprenyl-3-methyl-6-methoxy-1,4-benzoquinol (DMQH2). This Rickettsia bellii (strain OSU 85-389) protein is Ubiquinone/menaquinone biosynthesis C-methyltransferase UbiE.